Consider the following 431-residue polypeptide: Keratin, type I cytoskeletal 40 (431 aa).

Residues methionine 1 to glutamate 89 form a head region. Residues glutamate 89–leucine 400 form the IF rod domain. The interval lysine 90–glutamine 124 is coil 1A. Residues cysteine 125–aspartate 135 form a linker 1 region. Residues tyrosine 136–glycine 236 form a coil 1B region. A linker 12 region spans residues glutamine 237–threonine 252. The interval aspartate 253–glutamate 396 is coil 2. Residues aspartate 397–proline 431 form a tail region.

This sequence belongs to the intermediate filament family. In terms of assembly, heterotetramer of two type I and two type II keratins.

Its function is as follows. May play a role in late hair differentiation. The sequence is that of Keratin, type I cytoskeletal 40 (KRT40) from Bos taurus (Bovine).